Consider the following 932-residue polypeptide: 2-oxoglutarate dehydrogenase E1 component (932 aa).

This sequence belongs to the alpha-ketoglutarate dehydrogenase family. As to quaternary structure, homodimer. Part of the 2-oxoglutarate dehydrogenase (OGDH) complex composed of E1 (2-oxoglutarate dehydrogenase), E2 (dihydrolipoamide succinyltransferase) and E3 (dihydrolipoamide dehydrogenase); the complex contains multiple copies of the three enzymatic components (E1, E2 and E3). Requires thiamine diphosphate as cofactor.

It catalyses the reaction N(6)-[(R)-lipoyl]-L-lysyl-[protein] + 2-oxoglutarate + H(+) = N(6)-[(R)-S(8)-succinyldihydrolipoyl]-L-lysyl-[protein] + CO2. Its function is as follows. E1 component of the 2-oxoglutarate dehydrogenase (OGDH) complex which catalyzes the decarboxylation of 2-oxoglutarate, the first step in the conversion of 2-oxoglutarate to succinyl-CoA and CO(2). The sequence is that of 2-oxoglutarate dehydrogenase E1 component from Staphylococcus aureus (strain MRSA252).